We begin with the raw amino-acid sequence, 1591 residues long: GATOR1 complex protein DEPDC5 (1591 aa).

Disordered regions lie at residues 427–455 (GKKSASEKTKNGRDTSLGTPKESENTLPI), 478–532 (LATC…STNI), and 695–720 (LSNSSTGVNPRTQNKDSLEDSVSTSP). A compositionally biased stretch (basic and acidic residues) spans 430 to 439 (SASEKTKNGR). Positions 494–508 (SASSCDVSSSPSLPS) are enriched in low complexity. Ser-505 is modified (phosphoserine). The segment covering 518-532 (SQASDDSSLGKSTNI) has biased composition (polar residues). The residue at position 992 (Ser-992) is a Phosphoserine. 2 disordered regions span residues 1040–1064 (SQKSLGEQQTTVHGKSSTQPAENSS) and 1118–1153 (STGQPMDRGNNQTFGNSQNIEQAFPSANSGDYSSQQ). Polar residues predominate over residues 1118 to 1149 (STGQPMDRGNNQTFGNSQNIEQAFPSANSGDY). Positions 1175–1250 (PSTGVQLLSE…YGFYFYKIVM (76 aa)) constitute a DEP domain. The residue at position 1518 (Ser-1518) is a Phosphoserine.

It belongs to the IML1 family. As to quaternary structure, within the GATOR complex, component of the GATOR1 subcomplex, made of DEPDC5, NPRL2 and NPRL3. GATOR1 mediates the strong interaction of the GATOR complex with small GTPases Rag (RagA/RRAGA, RagB/RRAGB, RagC/RRAGC and/or RagD/RRAGD) heterodimers. GATOR1 interacts with GPR155/LYCHOS; interaction takes place in presence of cholesterol and prevents interaction between GATOR1 and KICSTOR. Interacts with SAMTOR; interaction is direct and takes place in presence of methionine, leading to inhibit the activity of the GATOR1 complex. Post-translationally, phosphorylation at Ser-992 and Ser-1518 by AKT1 and PIM1 inhibit the activity of DEPDC5, releasing inhibition of the mTORC1 pathway. In terms of processing, ubiquitinated. Amino acid-induced 'Lys-48'-linked polyubiquitination of DEPDC5 by the BCR(KLHL22) ubiquitin ligase complex leads to DEPDC5 proteasomal degradation and inhibition of the GATOR1 complex. Ubiquitination may occur at multiple lysines. In terms of tissue distribution, expressed at low levels in all brain regions. Expressed throughout brain development, including in midgestation embryonic head (11.5 dpc), neonatal brain and whole adult brain. Present in neurons and absent in non-neuronal cells, including astrocytes (at protein level).

The protein resides in the lysosome membrane. Its subcellular location is the cytoplasm. The protein localises to the cytosol. It localises to the perinuclear region. In terms of biological role, as a component of the GATOR1 complex functions as an inhibitor of the amino acid-sensing branch of the mTORC1 pathway. In response to amino acid depletion, the GATOR1 complex has GTPase activating protein (GAP) activity and strongly increases GTP hydrolysis by RagA/RRAGA (or RagB/RRAGB) within heterodimeric Rag complexes, thereby turning them into their inactive GDP-bound form, releasing mTORC1 from lysosomal surface and inhibiting mTORC1 signaling. In the presence of abundant amino acids, the GATOR1 complex is negatively regulated by GATOR2, the other GATOR subcomplex, in this amino acid-sensing branch of the TORC1 pathway. Within the GATOR1 complex, DEPDC5 mediates direct interaction with the nucleotide-binding pocket of small GTPases Rag (RagA/RRAGA, RagB/RRAGB, RagC/RRAGC and/or RagD/RRAGD) and coordinates their nucleotide loading states by promoting RagA/RRAGA or RagB/RRAGB into their GDP-binding state and RagC/RRAGC or RagD/RRAGD into their GTP-binding state. However, it does not execute the GAP activity, which is mediated by NPRL2. The chain is GATOR1 complex protein DEPDC5 from Mus musculus (Mouse).